Reading from the N-terminus, the 422-residue chain is Protein phosphatase methylesterase 1 (422 aa).

Residues 1-27 form a disordered region; that stretch reads MSDMFRKSVLNKLPHLPPTRAPWADES. Active-site residues include S207, D234, and H371.

This sequence belongs to the AB hydrolase superfamily.

It catalyses the reaction [phosphatase 2A protein]-C-terminal L-leucine methyl ester + H2O = [phosphatase 2A protein]-C-terminal L-leucine + methanol + H(+). Demethylates proteins that have been reversibly carboxymethylated. Demethylates the phosphatase PP2A catalytic subunit. The sequence is that of Protein phosphatase methylesterase 1 (PPE1) from Cryptococcus neoformans var. neoformans serotype D (strain B-3501A) (Filobasidiella neoformans).